The sequence spans 581 residues: Pre-mRNA 3'-end-processing factor FIP1 (581 aa).

Composition is skewed to basic and acidic residues over residues 1 to 10 (MSAGEVERLV) and 32 to 42 (VHVHSDLAKDL). 3 disordered regions span residues 1 to 95 (MSAG…EDDV), 211 to 282 (TVQQ…ESPD), and 320 to 581 (RSAT…APAE). The segment at 1-110 (MSAGEVERLV…DIKTGAPQYG (110 aa)) is sufficient for interaction with PAPOLA. The segment at 1-332 (MSAGEVERLV…TEVDNNFSKP (332 aa)) is necessary for stimulating PAPOLA activity. Acidic residues-rich tracts occupy residues 43–54 (DENEVERPEEEN) and 80–94 (TEDDSDSDSDDDEDD). A phosphoserine mark is found at Ser-84, Ser-86, and Ser-88. The tract at residues 136 to 219 (KGVDLDAPGS…ITVQQGRTGN (84 aa)) is sufficient for interaction with CPSF4. Positions 247-267 (SRNSTSSQSQTSTASRKASSS) are enriched in low complexity. Positions 271 to 282 (WQDRYGRAESPD) are enriched in basic and acidic residues. Ser-280 is subject to Phosphoserine. A compositionally biased stretch (polar residues) spans 320–330 (RSATEVDNNFS). Pro residues predominate over residues 331–389 (KPPPFFPPGAPPTHLPPPPFLPPPPTVSTAPPLIPPPGIPITVPPPGFPPPPGAPPPSL). The residue at position 411 (Tyr-411) is a Phosphotyrosine. The span at 419 to 435 (LTSSAPSWPSLVDTTKQ) shows a compositional bias: polar residues. Residues 428–581 (SLVDTTKQWD…QESTEAAPAE (154 aa)) are sufficient for interaction with CPSF1 and CSTF3. The segment covering 439 to 479 (YARREKDRDRDRERDRDRERERDRDRERERTRERERERDHS) has biased composition (basic and acidic residues). Residues 442–477 (REKDRDRDRERDRDRERERDRDRERERTRERERERD) form an arg/Asp/Glu-rich domain region. Residues 478 to 535 (HSPTPSVFNSDEERYRYREYAERGYERHRASREKEERHRERRHREKEETRHKSSRSNS) form a sufficient for interaction with AHCYL1 region. A Phosphoserine modification is found at Ser-479. Thr-481 carries the post-translational modification Phosphothreonine. Ser-483 and Ser-487 each carry phosphoserine. The span at 488–515 (DEERYRYREYAERGYERHRASREKEERH) shows a compositional bias: basic and acidic residues. Positions 529 to 538 (KSSRSNSRRR) are enriched in basic residues. Phosphoserine is present on Ser-541. Over residues 547-557 (HRRHKHKKSKR) the composition is skewed to basic residues.

This sequence belongs to the FIP1 family. Component of the cleavage and polyadenylation specificity factor (CPSF) complex, composed of CPSF1, CPSF2, CPSF3, CPSF4 and FIP1L1. Found in a complex with CPSF1, FIP1L1 and PAPOLA. Interacts with CPSF1, CPSF4, CSTF2 and CSTF3. Interacts with AHCYL1 (when phosphorylated); the interaction is direct and associates AHCYL1 with the CPSF complex and RNA. Interacts with PAPOLA; the interaction seems to be increased by the interaction with AHCYL1. Interacts with NUDT21/CPSF5; this interaction occurs in a RNA sequence-specific manner. Interacts (preferentially via unphosphorylated form and Arg/Glu/Asp-rich domain) with CPSF6 (via Arg/Ser-rich domain); this interaction mediates, at least in part, the interaction between the CFIm and CPSF complexes and may be inhibited by CPSF6 hyper-phosphorylation. Interacts (preferentially via unphosphorylated form and Arg/Asp/Glu-rich domain) with CPSF7 (via Arg/Ser-rich domain); this interaction mediates, at least in part, the interaction between the CFIm and CPSF complexes and may be inhibited by CPSF7 hyper-phosphorylation.

Its subcellular location is the nucleus. In terms of biological role, component of the cleavage and polyadenylation specificity factor (CPSF) complex that plays a key role in pre-mRNA 3'-end formation, recognizing the AAUAAA signal sequence and interacting with poly(A) polymerase and other factors to bring about cleavage and poly(A) addition. FIP1L1 contributes to poly(A) site recognition and stimulates poly(A) addition. Binds to U-rich RNA sequence elements surrounding the poly(A) site. May act to tether poly(A) polymerase to the CPSF complex. This chain is Pre-mRNA 3'-end-processing factor FIP1 (Fip1l1), found in Mus musculus (Mouse).